A 332-amino-acid polypeptide reads, in one-letter code: MNNLTPENIRQTILATPFLLNRIRTEFPQLAAVLNDPNAFATTWQSINASQLLQIPSSTYSMGMPSFSEDDLFDVEVQRRIEEQIRQNAVTENMQSAIENHPEVFGQVYMLFVNVEINGHKVKAFVDSGAQATILSADCAEKCGLTRLLDTRFQGVAKGVGMAKILGCVHSAPLKIGDLYLPCRFTVIEGRDVDMLLGLDMLRRYQACIDLENNVLRIHGKEIPFLGESEIPKLLANVEPSANAHGLGIEPASKASASSPNPQSGTRLGTKESVAPNNEGSSNPPSLVNPPTDPGLNSKIAQLVSMGFDPLEAAQALDAANGDLDVAASFLL.

Asp127 is a catalytic residue. A disordered region spans residues 246 to 298 (GLGIEPASKASASSPNPQSGTRLGTKESVAPNNEGSSNPPSLVNPPTDPGLNS). The segment covering 251–264 (PASKASASSPNPQS) has biased composition (low complexity). Polar residues predominate over residues 275 to 286 (APNNEGSSNPPS). The UBA domain occupies 291-332 (PTDPGLNSKIAQLVSMGFDPLEAAQALDAANGDLDVAASFLL).

This sequence belongs to the DDI1 family. In terms of assembly, homodimer. Interacts (via UBA domain) with polyubiquitin (polyUb) chains (via Lys-48-linked polyUbs). Has weak binding affinity for monoubiquitin. According to another report, has no affinity for monoubiquitin.

Its subcellular location is the cytoplasm. It is found in the cell membrane. Functionally, recognizes and binds polyubiquitin chains. Acts as a linker between the 19S proteasome and polyubiquitinated proteins via UBA domain interactions with ubiquitin for their subsequent degradation. Aspartic protease. Appears to act as negative regulator of constitutive exocytosis. May act at the level of secretory vesicle docking and fusion as a competitive inhibitor of SNARE assembly. Required for S-phase checkpoint control. This Schizosaccharomyces pombe (strain 972 / ATCC 24843) (Fission yeast) protein is UBA domain-containing protein Mud1.